The chain runs to 157 residues: Phosphopantetheine adenylyltransferase (157 aa).

Serine 9 contributes to the substrate binding site. Residues 9 to 10 (SF) and histidine 17 contribute to the ATP site. Positions 41, 73, and 87 each coordinate substrate. ATP is bound by residues 88 to 90 (GIR), glutamate 98, and 122 to 128 (YQDISSS).

The protein belongs to the bacterial CoaD family. Homohexamer. Mg(2+) is required as a cofactor.

Its subcellular location is the cytoplasm. The enzyme catalyses (R)-4'-phosphopantetheine + ATP + H(+) = 3'-dephospho-CoA + diphosphate. It functions in the pathway cofactor biosynthesis; coenzyme A biosynthesis; CoA from (R)-pantothenate: step 4/5. Reversibly transfers an adenylyl group from ATP to 4'-phosphopantetheine, yielding dephospho-CoA (dPCoA) and pyrophosphate. This Oenococcus oeni (strain ATCC BAA-331 / PSU-1) protein is Phosphopantetheine adenylyltransferase.